The primary structure comprises 304 residues: ATP phosphoribosyltransferase (304 aa).

It belongs to the ATP phosphoribosyltransferase family. Long subfamily. Requires Mg(2+) as cofactor.

The protein localises to the cytoplasm. The enzyme catalyses 1-(5-phospho-beta-D-ribosyl)-ATP + diphosphate = 5-phospho-alpha-D-ribose 1-diphosphate + ATP. The protein operates within amino-acid biosynthesis; L-histidine biosynthesis; L-histidine from 5-phospho-alpha-D-ribose 1-diphosphate: step 1/9. Feedback inhibited by histidine. Functionally, catalyzes the condensation of ATP and 5-phosphoribose 1-diphosphate to form N'-(5'-phosphoribosyl)-ATP (PR-ATP). Has a crucial role in the pathway because the rate of histidine biosynthesis seems to be controlled primarily by regulation of HisG enzymatic activity. This chain is ATP phosphoribosyltransferase, found in Xanthomonas oryzae pv. oryzae (strain MAFF 311018).